We begin with the raw amino-acid sequence, 179 residues long: Large ribosomal subunit protein uL5 (179 aa).

It belongs to the universal ribosomal protein uL5 family. As to quaternary structure, part of the 50S ribosomal subunit; part of the 5S rRNA/L5/L18/L25 subcomplex. Contacts the 5S rRNA and the P site tRNA. Forms a bridge to the 30S subunit in the 70S ribosome.

Its function is as follows. This is one of the proteins that bind and probably mediate the attachment of the 5S RNA into the large ribosomal subunit, where it forms part of the central protuberance. In the 70S ribosome it contacts protein S13 of the 30S subunit (bridge B1b), connecting the 2 subunits; this bridge is implicated in subunit movement. Contacts the P site tRNA; the 5S rRNA and some of its associated proteins might help stabilize positioning of ribosome-bound tRNAs. The chain is Large ribosomal subunit protein uL5 from Desulfitobacterium hafniense (strain Y51).